The chain runs to 556 residues: Dihydroxy-acid dehydratase (556 aa).

Asp81 lines the Mg(2+) pocket. Cys122 provides a ligand contact to [2Fe-2S] cluster. 2 residues coordinate Mg(2+): Asp123 and Lys124. N6-carboxylysine is present on Lys124. Position 196 (Cys196) interacts with [2Fe-2S] cluster. Position 444 (Glu444) interacts with Mg(2+). The active-site Proton acceptor is the Ser470.

The protein belongs to the IlvD/Edd family. Homodimer. [2Fe-2S] cluster is required as a cofactor. It depends on Mg(2+) as a cofactor.

It carries out the reaction (2R)-2,3-dihydroxy-3-methylbutanoate = 3-methyl-2-oxobutanoate + H2O. It catalyses the reaction (2R,3R)-2,3-dihydroxy-3-methylpentanoate = (S)-3-methyl-2-oxopentanoate + H2O. Its pathway is amino-acid biosynthesis; L-isoleucine biosynthesis; L-isoleucine from 2-oxobutanoate: step 3/4. It participates in amino-acid biosynthesis; L-valine biosynthesis; L-valine from pyruvate: step 3/4. Functionally, functions in the biosynthesis of branched-chain amino acids. Catalyzes the dehydration of (2R,3R)-2,3-dihydroxy-3-methylpentanoate (2,3-dihydroxy-3-methylvalerate) into 2-oxo-3-methylpentanoate (2-oxo-3-methylvalerate) and of (2R)-2,3-dihydroxy-3-methylbutanoate (2,3-dihydroxyisovalerate) into 2-oxo-3-methylbutanoate (2-oxoisovalerate), the penultimate precursor to L-isoleucine and L-valine, respectively. In Syntrophotalea carbinolica (strain DSM 2380 / NBRC 103641 / GraBd1) (Pelobacter carbinolicus), this protein is Dihydroxy-acid dehydratase.